The primary structure comprises 655 residues: Sphingomyelin phosphodiesterase 3 (655 aa).

Residues 1–10 (MVLYTTPFPN) are Cytoplasmic-facing. The segment at residues 11 to 31 (SCLSALHAVSWALIFPCYWLV) is an intramembrane region (helical). Topologically, residues 32–64 (DRLLASFIPTTYEKRQRADDPCCLQLFCTVLFT) are cytoplasmic. S-palmitoyl cysteine attachment occurs at residues C53, C54, and C59. An intramembrane region (helical) is located at residues 65–85 (PVYLALLVAALPFAFLGFIFW). Topologically, residues 86 to 655 (SPLQSARRPY…LMVSAGEEEA (570 aa)) are cytoplasmic. At S178 the chain carries Phosphoserine. A disordered region spans residues 209 to 318 (VEYKGDGGRH…SGGSGEPGAN (110 aa)). Composition is skewed to basic and acidic residues over residues 211–221 (YKGDGGRHPSD) and 246–255 (GGEEGGRPQE). S289 carries the phosphoserine modification. E362 contributes to the Mg(2+) binding site. Residues C395 and C396 are each lipidated (S-palmitoyl cysteine). Residue H639 is the Proton acceptor of the active site.

It belongs to the neutral sphingomyelinase family. Requires Mg(2+) as cofactor. In terms of processing, palmitoylated, palmitoylation-deficient proteins are targeted for lysosomal degradation. Predominantly expressed in brain (at protein level).

The protein localises to the golgi apparatus membrane. It localises to the cell membrane. The catalysed reaction is a sphingomyelin + H2O = phosphocholine + an N-acylsphing-4-enine + H(+). It catalyses the reaction N-(15Z-tetracosenoyl)sphing-4-enine-1-phosphocholine + H2O = N-(15Z-tetracosenoyl)-sphing-4-enine + phosphocholine + H(+). The enzyme catalyses N-(tetracosanoyl)-sphing-4-enine-1-phosphocholine + H2O = N-tetracosanoyl-sphing-4-enine + phosphocholine + H(+). It carries out the reaction N-(hexadecanoyl)-sphing-4-enine-1-phosphocholine + H2O = N-hexadecanoylsphing-4-enine + phosphocholine + H(+). The catalysed reaction is an N-(acyl)-sphingosylphosphocholine + H2O = an N-acyl-sphingoid base + phosphocholine + H(+). It catalyses the reaction 1-hexadecanoyl-sn-glycero-3-phosphocholine + H2O = 1-hexadecanoyl-sn-glycerol + phosphocholine + H(+). The enzyme catalyses 1-O-octadecyl-sn-glycero-3-phosphocholine + H2O = 1-O-octadecyl-sn-glycerol + phosphocholine + H(+). It carries out the reaction a sphingosylphosphocholine + H2O = a sphingoid base + phosphocholine + H(+). It functions in the pathway lipid metabolism; sphingolipid metabolism. Inhibited by nSMase inhibitor GW4869. Binding of anionic phospholipids (APLs) such as phosphatidylserine (PS) and phosphatidic acid (PA) increases enzymatic activity. Catalyzes the hydrolysis of sphingomyelin to form ceramide and phosphocholine. Ceramide mediates numerous cellular functions, such as apoptosis and growth arrest, and is capable of regulating these 2 cellular events independently. Also hydrolyzes sphingosylphosphocholine. Regulates the cell cycle by acting as a growth suppressor in confluent cells. Probably acts as a regulator of postnatal development and participates in bone and dentin mineralization. Binds to anionic phospholipids (APLs) such as phosphatidylserine (PS) and phosphatidic acid (PA) that modulate enzymatic activity and subcellular location. May be involved in IL-1-beta-induced JNK activation in hepatocytes. May act as a mediator in transcriptional regulation of NOS2/iNOS via the NF-kappa-B activation under inflammatory conditions. This Mus musculus (Mouse) protein is Sphingomyelin phosphodiesterase 3.